Reading from the N-terminus, the 945-residue chain is Splicing factor, suppressor of white-apricot homolog (945 aa).

2 disordered regions span residues 1-28 and 156-185; these read MYGAGGGRAKPERKGGVKEEAGPGGTGT and DYYDPSEPTEEEEPSKQREKNEAENLEENE. 2 stretches are compositionally biased toward basic and acidic residues: residues 9 to 21 and 169 to 178; these read AKPERKGGVKEEA and PSKQREKNEA. The SURP motif 1 repeat unit spans residues 211–253; the sequence is IIERTANFVCKQGAQFEIMLKAKQARNSQFDFLRFDHYLNPYY. Residues 271–301 are disordered; that stretch reads SKNEEKKKSGPTSDNEEEDDEEDGSYLHPSL. Phosphoserine is present on S283. Residues 284-294 show a composition bias toward acidic residues; the sequence is DNEEEDDEEDG. Residue K315 is modified to N6-acetyllysine. Disordered stretches follow at residues 332–355 and 403–448; these read KAQADSSAPAPPTADGTPAQPSQV and SSSP…PVAI. Low complexity predominate over residues 335 to 352; sequence ADSSAPAPPTADGTPAQP. Residues 412–426 show a composition bias toward pro residues; it reads VPPPPGTTPPPPPTT. Over residues 427 to 447 the composition is skewed to low complexity; sequence AEPSSGVTSTTTTTSALAPVA. Residues 458-498 form an SURP motif 2 repeat; sequence VIDKLAEYVARNGLKFETSVRAKNDQRFEFLQPWHQYNAYY. Disordered regions lie at residues 512-564, 589-680, and 712-921; these read GSTQ…KSTV, PLEK…QAER, and DTGV…VQSK. A compositionally biased stretch (low complexity) spans 514–527; it reads TQAASTAEEAPTET. Residues 528 to 540 are compositionally biased toward acidic residues; that stretch reads AVEESGEAGEDGA. A compositionally biased stretch (basic and acidic residues) spans 589–598; sequence PLEKNRVKLD. Phosphoserine occurs at positions 601 and 621. Residues 615-630 show a composition bias toward low complexity; it reads SSVANPSPAAAPPSVA. Positions 632–686 form a coiled coil; it reads EEKKPQLTQEELEAKQAKQKLEDRLAAAAREKLAQASKESKEKQLQAERKRKAAL. T639 is modified (phosphothreonine). Basic and acidic residues-rich tracts occupy residues 643-679 and 733-752; these read LEAKQAKQKLEDRLAAAAREKLAQASKESKEKQLQAE and KPPERPSNRCRDPPREEERE. 2 stretches are compositionally biased toward basic residues: residues 753–787 and 795–810; these read KKKKKHKKRSRTRSRSPKYHSSSKPRSRSHSKAKH and TVRRSRSRSRSPRRRA. The span at 811-821 shows a compositional bias: basic and acidic residues; it reads HSPERRREERS. Residues S829 and S831 each carry the phosphoserine modification. Residues 835-861 are compositionally biased toward basic residues; it reads SRKRTRSRSPHEKKKKRRSRSRTKAKA. Residues 871 to 894 show a composition bias toward low complexity; the sequence is QAAQRPSAHSAHSASISPVESRGS. A compositionally biased stretch (basic and acidic residues) spans 895–908; it reads SQERSRGVSQEKDG. 2 positions are modified to phosphoserine: S899 and S903. The segment covering 909 to 920 has biased composition (low complexity); that stretch reads QISSAIVSSVQS.

It localises to the nucleus. In terms of biological role, plays a role as an alternative splicing regulator. Regulates its own expression at the level of RNA processing. Also regulates the splicing of fibronectin and CD45 genes. May act, at least in part, by interaction with other R/S-containing splicing factors. Represses the splicing of MAPT/Tau exon 10. The sequence is that of Splicing factor, suppressor of white-apricot homolog (Sfswap) from Mus musculus (Mouse).